The primary structure comprises 215 residues: Protein-L-isoaspartate O-methyltransferase (215 aa).

Residue Ser-62 is part of the active site.

It belongs to the methyltransferase superfamily. L-isoaspartyl/D-aspartyl protein methyltransferase family.

It localises to the cytoplasm. It carries out the reaction [protein]-L-isoaspartate + S-adenosyl-L-methionine = [protein]-L-isoaspartate alpha-methyl ester + S-adenosyl-L-homocysteine. Its function is as follows. Catalyzes the methyl esterification of L-isoaspartyl residues in peptides and proteins that result from spontaneous decomposition of normal L-aspartyl and L-asparaginyl residues. It plays a role in the repair and/or degradation of damaged proteins. This Ruegeria sp. (strain TM1040) (Silicibacter sp.) protein is Protein-L-isoaspartate O-methyltransferase.